The sequence spans 169 residues: Large ribosomal subunit protein uL10 (169 aa).

The protein belongs to the universal ribosomal protein uL10 family. In terms of assembly, part of the ribosomal stalk of the 50S ribosomal subunit. The N-terminus interacts with L11 and the large rRNA to form the base of the stalk. The C-terminus forms an elongated spine to which L12 dimers bind in a sequential fashion forming a multimeric L10(L12)X complex.

Its function is as follows. Forms part of the ribosomal stalk, playing a central role in the interaction of the ribosome with GTP-bound translation factors. This Rickettsia felis (strain ATCC VR-1525 / URRWXCal2) (Rickettsia azadi) protein is Large ribosomal subunit protein uL10.